A 1126-amino-acid polypeptide reads, in one-letter code: Probable serine/threonine-protein kinase DDB_G0280111 (1126 aa).

Residues 16–295 form the Protein kinase domain; the sequence is LNFVKQIAEG…NLLRNQQPLF (280 aa). Residues 22-30 and Lys45 contribute to the ATP site; that span reads IAEGGFSYV. Asp147 acts as the Proton acceptor in catalysis. Residues 314-333 show a composition bias toward low complexity; the sequence is NNNNNINNNNNNNIVNGKNI. 4 disordered regions span residues 314–469, 760–901, 944–1072, and 1095–1126; these read NNNN…NGNN, LNLN…QQQQ, TPSS…DEVR, and NKQSRMNNPNNLFDEGDSGFGDGEEEDEGLLN. Positions 347 to 364 are enriched in pro residues; it reads TPTPPPPAPSQSPSPSPS. Positions 367 to 390 are enriched in polar residues; the sequence is VVNNIENNSNGLEHSNSNGNISQP. 3 stretches are compositionally biased toward low complexity: residues 413 to 422, 432 to 469, and 760 to 795; these read PPNNSNNSFD, NLSNNPFNVNSNDNSNSSNNNNNNNNNNNNNNNNNGNN, and LNLNNNNNNNNNSNNSNNSNNSNSGNLSGNASLNSS. Composition is skewed to polar residues over residues 796 to 825 and 833 to 845; these read FDNINSSNPFSTEPTFNPFSATTTNTSESG and EPTSNPSPRYQQS. Positions 846–856 are enriched in low complexity; it reads NNNNNNNNNNN. The span at 857–866 shows a compositional bias: polar residues; that stretch reads GTPISLTPGS. Composition is skewed to low complexity over residues 886-901, 953-971, and 1003-1035; these read QQQQHPQQQQQQQQQQ, PSTGPTTAAQQQQQQQQSQ, and NVNINNNNNSHVSAPHSLNSSSSSISSISNPNL. Over residues 1095–1105 the composition is skewed to polar residues; that stretch reads NKQSRMNNPNN. Residues 1108-1126 are compositionally biased toward acidic residues; that stretch reads DEGDSGFGDGEEEDEGLLN.

It belongs to the protein kinase superfamily. Ser/Thr protein kinase family.

The catalysed reaction is L-seryl-[protein] + ATP = O-phospho-L-seryl-[protein] + ADP + H(+). It carries out the reaction L-threonyl-[protein] + ATP = O-phospho-L-threonyl-[protein] + ADP + H(+). The sequence is that of Probable serine/threonine-protein kinase DDB_G0280111 from Dictyostelium discoideum (Social amoeba).